The sequence spans 119 residues: MTNTKKILHNALYYVLIIIYEYVLLLVHCLRYFFEFLFLFLPLWLVFFFLMLSLNNLSRSYSSSPSSWLPVNSLSLASLFSSSFCSPSSNFLFLEPLSSELSPKVFLPLITPSGFRSSL.

Transmembrane regions (helical) follow at residues 7–27 (ILHN…LLLV) and 32–52 (YFFE…FLML).

Its subcellular location is the membrane. This is an uncharacterized protein from Saccharomyces cerevisiae (strain ATCC 204508 / S288c) (Baker's yeast).